Reading from the N-terminus, the 438-residue chain is Protein translocase subunit SecY (438 aa).

A helical transmembrane segment spans residues 1–43 (MKIKPILELIPEVKRPLKGVSFKEKIQWTGLVLILYFILGTID). Topologically, residues 44 to 54 (IYMGGAEMPAM) are extracellular. The segment at residues 55–62 (FAFWQTVT) is an intramembrane region (helical). The discontinuously helical transmembrane segment at 55–83 (FAFWQTVTASKMGTLITLGIGPIVTAGII) threads the bilayer. Residues 63-74 (ASKMGTLITLGI) lie within the membrane without spanning it. Residues 75–83 (GPIVTAGII) constitute an intramembrane region (helical). Topologically, residues 84–104 (MQLLVGSELISLDLSKPMNRA) are cytoplasmic. Residues 105–129 (LFQGLQKLFGIFLCFLEAVMFVGAG) form a helical membrane-spanning segment. Over 130-136 (AFGVVNS) the chain is Extracellular. The chain crosses the membrane as a helical span at residues 137-161 (TLALILVLQLALGAILVIYLDEIVS). At 162–167 (RYGIGS) the chain is on the cytoplasmic side. A helical membrane pass occupies residues 168 to 186 (GIGLFIAAGVAQTIFVGAF). Over 187–209 (GAEGYLWKFFSAMSVGSLGIAFE) the chain is Extracellular. A helical transmembrane segment spans residues 210–231 (YILPILSTLFVFLVVVYVESIR). The Cytoplasmic segment spans residues 232 to 256 (VEIPLAHGRVKGAVGKYPIKFIYVS). The helical transmembrane segment at 257–278 (NLPVILAAALFANIQLWGMFLD) threads the bilayer. Topologically, residues 279 to 315 (RMGYPILGQYSNGTAVSGIAYYFSTPYGISNIISDPL) are extracellular. Residues 316–335 (HAIFYTLMMVIFCILFGLFW) traverse the membrane as a helical segment. Residues 336–378 (VETSGLDAKSMAKKLGNLDMAIKGFRKSQKSIEQRLKRYIKPI) are Cytoplasmic-facing. Residues 379–397 (TVMGSAFVGFLAAAADFTG) traverse the membrane as a helical segment. Topologically, residues 398 to 400 (ALG) are extracellular. Residues 401–415 (GGTGVLLTVSIVYRL) form a helical membrane-spanning segment. The Cytoplasmic portion of the chain corresponds to 416 to 438 (YEQLVQEQLSELHPAVAKFVGKR).

It belongs to the SecY/SEC61-alpha family. Component of the Sec protein translocase complex. Heterotrimer consisting of alpha (SecY), beta (SecG) and gamma (SecE) subunits. The heterotrimers can form oligomers, although 1 heterotrimer is thought to be able to translocate proteins. Interacts with the ribosome. May interact with SecDF, and other proteins may be involved.

It localises to the cell membrane. The central subunit of the protein translocation channel SecYEG. Consists of two halves formed by TMs 1-5 and 6-10. These two domains form a lateral gate at the front which open onto the bilayer between TMs 2 and 7, and are clamped together by SecE at the back. The channel is closed by both a pore ring composed of hydrophobic SecY resides and a short helix (helix 2A) on the extracellular side of the membrane which forms a plug. The plug probably moves laterally to allow the channel to open. The ring and the pore may move independently. This is Protein translocase subunit SecY from Methanococcus vannielii.